Reading from the N-terminus, the 184-residue chain is Potassium-transporting ATPase KdpC subunit (184 aa).

A helical membrane pass occupies residues 6–26; the sequence is TAVLYTIISAVFLGLGYPLIM.

The protein belongs to the KdpC family. In terms of assembly, the system is composed of three essential subunits: KdpA, KdpB and KdpC.

Its subcellular location is the cell inner membrane. Functionally, part of the high-affinity ATP-driven potassium transport (or Kdp) system, which catalyzes the hydrolysis of ATP coupled with the electrogenic transport of potassium into the cytoplasm. This subunit acts as a catalytic chaperone that increases the ATP-binding affinity of the ATP-hydrolyzing subunit KdpB by the formation of a transient KdpB/KdpC/ATP ternary complex. This chain is Potassium-transporting ATPase KdpC subunit, found in Acidobacterium capsulatum (strain ATCC 51196 / DSM 11244 / BCRC 80197 / JCM 7670 / NBRC 15755 / NCIMB 13165 / 161).